Reading from the N-terminus, the 526-residue chain is Triacylglycerol lipase OBL1 (526 aa).

A helical membrane pass occupies residues 79-99 (GHLTDFLLNFYYQNHGFLGIL). The GXSXG motif lies at 338-342 (GHSLG). Ser340 (nucleophile) is an active-site residue. Catalysis depends on charge relay system residues Asp404 and His497.

It belongs to the AB hydrolase superfamily. Lipase family.

The protein resides in the membrane. The catalysed reaction is a triacylglycerol + H2O = a diacylglycerol + a fatty acid + H(+). In terms of biological role, acid lipase that can hydrolyze a range of triacylglycerols but is not active on phospholipids. In vitro, hydrolyzes triolein, trilinolein, triricinolein, tripalmitin, trilaurin and tricaprin. May play a role in the regulation of lipolysis in germinating seeds. The protein is Triacylglycerol lipase OBL1 of Ricinus communis (Castor bean).